The following is a 647-amino-acid chain: Microtubule-associated protein 9 (647 aa).

Serine 2 is subject to N-acetylserine. Tyrosine 12 is modified (phosphotyrosine). 6 disordered regions span residues 127-323, 344-421, 491-514, 530-553, 580-600, and 613-647; these read KSFS…ELIM, SATA…PDRA, KRLEEKNKKKTEEENAARKGEALQ, KNRKEREYERAKKQKEEETVAEKK, NEKRKEELKRAEKKDKDKQAI, and QERIERKQKKRHSFLESEALPPWSPPSRTVFAKVF. Residues 133–145 show a composition bias toward basic and acidic residues; the sequence is QNKDEEFEKDKIK. Residues 155–166 are compositionally biased toward polar residues; the sequence is IKSTSSAENNSL. Basic residues predominate over residues 174–186; sequence PSPRPRSMLKKKS. A coiled-coil region spans residues 184-210; it reads KKSHMEEKDGLEDKETALSEELELHSA. Positions 187-200 are enriched in basic and acidic residues; it reads HMEEKDGLEDKETA. Composition is skewed to polar residues over residues 210-219 and 239-249; these read APSSLPTPNG and CLTSLASSSLK. Over residues 268–287 the composition is skewed to basic and acidic residues; sequence DPNEEITENHNSLKSDENKE. Positions 298–328 form a coiled coil; the sequence is AVEKSKESQVTADDLEEEKAKAELIMDDDRT. The segment covering 365–374 has biased composition (low complexity); that stretch reads NNRASSASAR. Residues 443–628 are a coiled coil; the sequence is MHRIKRIESE…KQKKRHSFLE (186 aa).

As to quaternary structure, binds to purified microtubules via its C-terminus.

It localises to the cytoplasm. It is found in the cytoskeleton. The protein localises to the spindle. Its function is as follows. Involved in organization of the bipolar mitotic spindle. Required for bipolar spindle assembly, mitosis progression and cytokinesis. May act by stabilizing interphase microtubules. This is Microtubule-associated protein 9 (MAP9) from Homo sapiens (Human).